Consider the following 38-residue polypeptide: Cytochrome b6-f complex subunit 5 (38 aa).

Residues 5–25 traverse the membrane as a helical segment; the sequence is LLLGIVLGLIPVTLAGLFVAA.

The protein belongs to the PetG family. In terms of assembly, the 4 large subunits of the cytochrome b6-f complex are cytochrome b6, subunit IV (17 kDa polypeptide, PetD), cytochrome f and the Rieske protein, while the 4 small subunits are PetG, PetL, PetM and PetN. The complex functions as a dimer.

It is found in the cellular thylakoid membrane. Functionally, component of the cytochrome b6-f complex, which mediates electron transfer between photosystem II (PSII) and photosystem I (PSI), cyclic electron flow around PSI, and state transitions. PetG is required for either the stability or assembly of the cytochrome b6-f complex. This is Cytochrome b6-f complex subunit 5 from Synechocystis sp. (strain ATCC 27184 / PCC 6803 / Kazusa).